Reading from the N-terminus, the 147-residue chain is D-aminoacyl-tRNA deacylase (147 aa).

A Gly-cisPro motif, important for rejection of L-amino acids motif is present at residues 136 to 137 (GP).

The protein belongs to the DTD family. In terms of assembly, homodimer.

It is found in the cytoplasm. It catalyses the reaction glycyl-tRNA(Ala) + H2O = tRNA(Ala) + glycine + H(+). The catalysed reaction is a D-aminoacyl-tRNA + H2O = a tRNA + a D-alpha-amino acid + H(+). An aminoacyl-tRNA editing enzyme that deacylates mischarged D-aminoacyl-tRNAs. Also deacylates mischarged glycyl-tRNA(Ala), protecting cells against glycine mischarging by AlaRS. Acts via tRNA-based rather than protein-based catalysis; rejects L-amino acids rather than detecting D-amino acids in the active site. By recycling D-aminoacyl-tRNA to D-amino acids and free tRNA molecules, this enzyme counteracts the toxicity associated with the formation of D-aminoacyl-tRNA entities in vivo and helps enforce protein L-homochirality. The chain is D-aminoacyl-tRNA deacylase from Streptococcus pneumoniae serotype 4 (strain ATCC BAA-334 / TIGR4).